The primary structure comprises 443 residues: Amino-acid acetyltransferase (443 aa).

Positions 296 to 435 constitute an N-acetyltransferase domain; sequence EQIRRATIND…KEMYNYQRRS (140 aa).

This sequence belongs to the acetyltransferase family. ArgA subfamily. In terms of assembly, homohexamer.

The protein localises to the cytoplasm. It catalyses the reaction L-glutamate + acetyl-CoA = N-acetyl-L-glutamate + CoA + H(+). The protein operates within amino-acid biosynthesis; L-arginine biosynthesis; N(2)-acetyl-L-ornithine from L-glutamate: step 1/4. In Enterobacter sp. (strain 638), this protein is Amino-acid acetyltransferase.